We begin with the raw amino-acid sequence, 466 residues long: Probable Xaa-Pro aminopeptidase pepP (466 aa).

Residues aspartate 264, aspartate 275, glutamate 398, and glutamate 438 each contribute to the Mn(2+) site.

The protein belongs to the peptidase M24B family. Requires Mn(2+) as cofactor.

It carries out the reaction Release of any N-terminal amino acid, including proline, that is linked to proline, even from a dipeptide or tripeptide.. Functionally, catalyzes the removal of a penultimate prolyl residue from the N-termini of peptides. This chain is Probable Xaa-Pro aminopeptidase pepP (pepP), found in Aspergillus clavatus (strain ATCC 1007 / CBS 513.65 / DSM 816 / NCTC 3887 / NRRL 1 / QM 1276 / 107).